Here is a 220-residue protein sequence, read N- to C-terminus: Cell surface glycolipoprotein MPB83 (220 aa).

The N-terminal stretch at 1–24 (MINVQAKPAAAASLAAIAIAFLAG) is a signal peptide. Cys25 carries the N-palmitoyl cysteine lipid modification. Cys25 is lipidated: S-diacylglycerol cysteine. 2 O-linked (Man...) threonine glycosylation sites follow: Thr48 and Thr49. In terms of domain architecture, FAS1 spans 83-215 (QDPVATAASN…ATVYMIDTVL (133 aa)).

As to quaternary structure, interacts with host (human) TLR2. In terms of processing, O-glycosylated. Contains 0-3 mannose residues attached to residues 48-49 in various configurations; the dominant glycoform is Thr-48(Man)/Thr-49(Man2) with an unusual Man(1-&gt;3)Man linkage, but Thr48(Man3)/Thr49(Man0) through to Thr48(Man0/)Thr49(Man3) are also seen. When isolated from culture filtrate runs as 25 and 23 kDa proteins; the larger protein is much less abundant, mostly associated with the cell and starts at residue 28, the shorter is more abundant and starts at residue 48.

It is found in the cell membrane. Its subcellular location is the secreted. The protein localises to the cell wall. In terms of biological role, induces expression of human (host) matrix metalloproteinase-9 (MMP9) in a TLR1/TLR2-dependent fashion; the acylated 20 first mature residues (residues 25-40) induce the most expression, but whole recombinant protein (non-acylated and non-glycosylated), and mannosylated but not acylated protein (residues 26-220) also induce expression. The protein is Cell surface glycolipoprotein MPB83 (mpb83) of Mycobacterium bovis (strain ATCC BAA-935 / AF2122/97).